We begin with the raw amino-acid sequence, 96 residues long: Aspartyl/glutamyl-tRNA(Asn/Gln) amidotransferase subunit C (96 aa).

This sequence belongs to the GatC family. In terms of assembly, heterotrimer of A, B and C subunits.

It catalyses the reaction L-glutamyl-tRNA(Gln) + L-glutamine + ATP + H2O = L-glutaminyl-tRNA(Gln) + L-glutamate + ADP + phosphate + H(+). The enzyme catalyses L-aspartyl-tRNA(Asn) + L-glutamine + ATP + H2O = L-asparaginyl-tRNA(Asn) + L-glutamate + ADP + phosphate + 2 H(+). Its function is as follows. Allows the formation of correctly charged Asn-tRNA(Asn) or Gln-tRNA(Gln) through the transamidation of misacylated Asp-tRNA(Asn) or Glu-tRNA(Gln) in organisms which lack either or both of asparaginyl-tRNA or glutaminyl-tRNA synthetases. The reaction takes place in the presence of glutamine and ATP through an activated phospho-Asp-tRNA(Asn) or phospho-Glu-tRNA(Gln). The protein is Aspartyl/glutamyl-tRNA(Asn/Gln) amidotransferase subunit C of Exiguobacterium sp. (strain ATCC BAA-1283 / AT1b).